Here is a 148-residue protein sequence, read N- to C-terminus: Ribonuclease H (148 aa).

The 142-residue stretch at 1-142 folds into the RNase H type-1 domain; that stretch reads MSDSVELYTD…ADQLANRGVD (142 aa). Asp10, Glu48, Asp70, and Asp134 together coordinate Mg(2+). Residues 129–148 form a disordered region; that stretch reads GNERADQLANRGVDEVRAKR.

Belongs to the RNase H family. Monomer. Mg(2+) serves as cofactor.

The protein resides in the cytoplasm. It carries out the reaction Endonucleolytic cleavage to 5'-phosphomonoester.. Its function is as follows. Endonuclease that specifically degrades the RNA of RNA-DNA hybrids. The polypeptide is Ribonuclease H (Pseudomonas putida (strain W619)).